We begin with the raw amino-acid sequence, 137 residues long: UPF0768 protein C1952.04c (137 aa).

A compositionally biased stretch (basic and acidic residues) spans 79–93 (QRRRREDLPTPERPE). The tract at residues 79 to 137 (QRRRREDLPTPERPEASAQQHAFFPGSSSQQTDIPNVRPQPHIPPPRKSDEAPPPYSYK) is disordered. The span at 119–137 (PHIPPPRKSDEAPPPYSYK) shows a compositional bias: pro residues.

Belongs to the UPF0768 family.

In Schizosaccharomyces pombe (strain 972 / ATCC 24843) (Fission yeast), this protein is UPF0768 protein C1952.04c.